The chain runs to 306 residues: Serine/threonine-protein kinase csk1 (306 aa).

The Protein kinase domain occupies 11–306 (LTDIRHLTDG…KVSARLSQYA (296 aa)). ATP contacts are provided by residues 17–25 (LTDGTISEV) and Lys-40. Asp-129 acts as the Proton acceptor in catalysis.

It belongs to the protein kinase superfamily. CMGC Ser/Thr protein kinase family. CDC2/CDKX subfamily.

The catalysed reaction is L-seryl-[protein] + ATP = O-phospho-L-seryl-[protein] + ADP + H(+). The enzyme catalyses L-threonyl-[protein] + ATP = O-phospho-L-threonyl-[protein] + ADP + H(+). Acts as a CAK-activating kinase that specifically activates crk1 of the crk1-mcs2 CAK complex. The chain is Serine/threonine-protein kinase csk1 (csk1) from Schizosaccharomyces pombe (strain 972 / ATCC 24843) (Fission yeast).